An 87-amino-acid polypeptide reads, in one-letter code: Beta-defensin 109C (87 aa).

An N-terminal signal peptide occupies residues 1–22 (MRLHLLLLILLLFSILLSPVRG). 3 disulfide bridges follow: Cys-31–Cys-59, Cys-38–Cys-53, and Cys-43–Cys-60.

This sequence belongs to the beta-defensin family.

It is found in the secreted. Has antibacterial activity. In Homo sapiens (Human), this protein is Beta-defensin 109C (DEFB109C).